The primary structure comprises 145 residues: Large ribosomal subunit protein uL13 (145 aa).

The disordered stretch occupies residues 72 to 91 (DKMYHRHSNHPGGLKSISAG).

Belongs to the universal ribosomal protein uL13 family. As to quaternary structure, part of the 50S ribosomal subunit.

Its function is as follows. This protein is one of the early assembly proteins of the 50S ribosomal subunit, although it is not seen to bind rRNA by itself. It is important during the early stages of 50S assembly. This Staphylococcus epidermidis (strain ATCC 12228 / FDA PCI 1200) protein is Large ribosomal subunit protein uL13.